We begin with the raw amino-acid sequence, 770 residues long: MNTGDKAKSQAVPASGDIDQQALFFHRYPRPGKLEIQPTKPLGNQRDLALAYSPGVAAPCLAIKDNPETAADFTARANLVAVVSNGTAVLGLGNIGPLASKPVMEGKAVLFKKFAGIDVFDIEIDAPTVDRMVDVISALEPTFGGINLEDIKAPECFEVERRLREKMEIPVFHDDQHGTAIIVAAAVLNGLELAGKDIAEAKIVASGAGAAALACLNLLVTLGARRENIWVHDIEGLVYKGREALMDEWKAVYAQESDNRVLADSIGGADVFLGLSAAGVLKPELLARMAEKPLIMALANPTPEIMPEVARAARPDAMICTGRSDFPNQVNNVLCFPHIFRGALDCGARTINEEMKMAAVRAIAGLAREEPSDVAARAYSGETPVFGPDYLIPSPFDQRLILRIAPAVAKAAAESGVATRPIQDFDAYLDKLNRFVFRSGFIMKPVFAAAKNAAKNRVIFAEGEDERVLRAAQVLLEEGTAKPILIGRPQIIETRLRRYGLRIRPDVDFEVVNPEGDPRYRDYVDDYFALVGRLGVIPEAARTIVRTNTTVIGALAVKRGEADALICGVEGRYSRHLRDVSQIIGKRSGVLDFSALSLLISQRGATFFTDTYVSFSPSAEEIAQTTVMAANEIRRFGITPRAALVSHSNFGSRDSESAFKMRTALQLVRELAPDLEVDGEMHGDSAISEVLRQRVMPDSTLNGEANLLVFPNLDAANITLGVVKTMTDSLHVGPILLGSALPAHILSPSVTSRGVVNMAALAVVESSHPV.

The tract at residues 1–440 (MNTGDKAKSQ…KLNRFVFRSG (440 aa)) is malic enzyme. The active-site Proton acceptor is lysine 107. 2 residues coordinate a divalent metal cation: glutamate 149 and aspartate 150. Positions 175 and 300 each coordinate NAD(+). The phosphate acetyltransferase stretch occupies residues 441-770 (FIMKPVFAAA…LAVVESSHPV (330 aa)).

This sequence in the N-terminal section; belongs to the malic enzymes family. The protein in the C-terminal section; belongs to the phosphate acetyltransferase and butyryltransferase family. Homooctamer. Mg(2+) serves as cofactor. Mn(2+) is required as a cofactor.

It carries out the reaction (S)-malate + NAD(+) = pyruvate + CO2 + NADH. Subject to substrate inhibition and shows allosteric regulation by acetyl-CoA. In terms of biological role, required for symbiotic nitrogen fixation. Plays a key role in the conversion of malate to acetyl-CoA for efficient tricarboxylic acid cycle function in nitrogen-fixating bacteria. In Rhizobium meliloti (strain 1021) (Ensifer meliloti), this protein is NAD-dependent malic enzyme (dme).